We begin with the raw amino-acid sequence, 398 residues long: MYPVEYPPPLYSSCKHILSLTAKQLKTKAFVVFSASLSLIIGLITGCCLLFASPPAFITSGICLALLVSVISFFGCRKLIPYGIQRLISYTKSLPALSDSLIDFLKTESTSISSLLPDPKLKNCFKGTSSEYKKFFFDHPETLLSSAFMDWTPQIGPSAPQQTKTIVLSHYCLPFSLTLSTLDFETLHTYIVKSNKLRCHVGYAHQLPPANPVIRQARQGVLQQLYNTGTETFFIPIQESALLQQEELFKTLFRHYVQIIERNLSSRVLLLEPLKTPVHTHKARTLESLALFCALEYLCYTTLGDWGTKELDPTPPLDYKDFFTILIKKQCPASNMRISSPARPMNATKLTTIVLSGLEEEDKLGLLGQMQPFLFTAEIAHPQRFEATLIQNVLDDIA.

A run of 2 helical transmembrane segments spans residues 31 to 51 (VVFS…CLLF) and 56 to 76 (AFIT…FFGC).

It belongs to the chlamydial CPn_0129/CT_036/TC_0306 family.

Its subcellular location is the cell membrane. This is an uncharacterized protein from Chlamydia muridarum (strain MoPn / Nigg).